Reading from the N-terminus, the 434-residue chain is MKVLSALCVLLVSVATAKQQLSELQYRNAFTNWMIAHQRHYSSEEFNGRFNIFKANMDYINEWNTKGSETVLGLNVFADITNEEYRATYLGTPFDASSLEMTPSEKVFGGVQANSVDWRAKGAVTPIKNQGECGGCWSFSATGATEGAQYIANGDSDLTSVSEQQLIDCSGSYGNNGCEGGLMTLAFEYIINNGGIDTESSYPFTANTEKCKYNPSNIGAELSSYVNVTSGSESDLAAKVTQGPTSVAIDASQPSFQFYSSGIYNEPACSSTQLDHGVLAVGFGSGSSGSQSQSAGSQSQSSNNNWSESSQSQDSNSWSQSSQSQSSQDSNSWSQSSQSQGSNSFTGAGTGSGSGSVSGSGSASGSSSFSGSSNGGNSNSGDYPTDGNYWIVKNSWGLDWGINGYILMSKDKDNQCGIATMASIPQAIPKSKWN.

The N-terminal stretch at 1-19 (MKVLSALCVLLVSVATAKQ) is a signal peptide. The propeptide at 20–113 (QLSELQYRNA…SEKVFGGVQA (94 aa)) is activation peptide. Cystine bridges form between C133-C178 and C169-C211. The active site involves C136. An N-linked (GlcNAc...) asparagine glycan is attached at N227. An intrachain disulfide couples C269 to C416. H276 is an active-site residue. The disordered stretch occupies residues 285 to 384 (SGSSGSQSQS…GGNSNSGDYP (100 aa)). The span at 288-347 (SGSQSQSAGSQSQSSNNNWSESSQSQDSNSWSQSSQSQSSQDSNSWSQSSQSQGSNSFTG) shows a compositional bias: low complexity. N305 is a glycosylation site (N-linked (GlcNAc...) asparagine). Residues 348 to 358 (AGTGSGSGSVS) show a composition bias toward gly residues. The span at 359-381 (GSGSASGSSSFSGSSNGGNSNSG) shows a compositional bias: low complexity. The active site involves N394.

Belongs to the peptidase C1 family.

It is found in the lysosome. In Dictyostelium discoideum (Social amoeba), this protein is Cysteine proteinase 6 (cprF).